Reading from the N-terminus, the 287-residue chain is Inorganic pyrophosphatase (287 aa).

Arginine 79 serves as a coordination point for diphosphate. The Mg(2+) site is built by aspartate 116, aspartate 121, and aspartate 153.

This sequence belongs to the PPase family. It depends on Mg(2+) as a cofactor.

The protein resides in the cytoplasm. It carries out the reaction diphosphate + H2O = 2 phosphate + H(+). The chain is Inorganic pyrophosphatase (IPP1) from Zygosaccharomyces bailii.